The primary structure comprises 519 residues: Putative cytochrome P450 CYP13A1 (519 aa).

A heme-binding site is contributed by cysteine 465.

The protein belongs to the cytochrome P450 family. It depends on heme as a cofactor.

Its function is as follows. Cytochromes P450 are a group of heme-thiolate monooxygenases. They oxidize a variety of structurally unrelated compounds, including steroids, fatty acids, and xenobiotics. This Caenorhabditis elegans protein is Putative cytochrome P450 CYP13A1 (cyp-13A1).